We begin with the raw amino-acid sequence, 688 residues long: Complement C1s-1 subcomponent (688 aa).

The first 15 residues, 1-15, serve as a signal peptide directing secretion; sequence MWCLVLFSLLASFSA. Residues 16 to 130 enclose the CUB 1 domain; that stretch reads EPTMHGEILS…TGFAAYYTAI (115 aa). Ca(2+)-binding residues include Glu60, Asp68, Asp113, Asp131, Ile132, and Glu134. The cysteines at positions 65 and 83 are disulfide-linked. The EGF-like; calcium-binding domain maps to 131 to 172; it reads DINECTDFTDVPCSHFCNNFIGGYFCSCPPEYFLHDDMRNCG. 3 disulfides stabilise this stretch: Cys135-Cys147, Cys143-Cys156, and Cys158-Cys171. Ca(2+)-binding residues include Asn149, Phe150, and Gly153. Asn149 is modified ((3R)-3-hydroxyasparagine). Asn174 carries an N-linked (GlcNAc...) asparagine glycan. Cys175 and Cys202 are disulfide-bonded. The 116-residue stretch at 175-290 folds into the CUB 2 domain; the sequence is CSGDVFTALI…KGWKLRYHGD (116 aa). Residues Glu226, Asp236, Asp275, Gly278, and Gln279 each contribute to the Ca(2+) site. A disulfide bridge connects residues Cys234 and Cys251. Sushi domains follow at residues 292-356 and 357-423; these read ISCA…KCQP and VYCG…RCIP. 7 disulfides stabilise this stretch: Cys294–Cys341, Cys321–Cys354, Cys359–Cys403, Cys386–Cys421, Cys425–Cys549, Cys595–Cys618, and Cys627–Cys659. The Peptidase S1 domain occupies 438–680; the sequence is IFGGQPAKIE…YVDWILKTMQ (243 aa). Residues His475 and Asp529 each act as charge relay system in the active site. Residue Ser631 is the Charge relay system of the active site. N-linked (GlcNAc...) asparagine glycosylation is present at Asn641.

The protein belongs to the peptidase S1 family. As to quaternary structure, core component of the complement C1 complex, a calcium-dependent complex composed of 1 molecule of the C1Q subcomplex, 2 molecules of C1R and 2 molecules of C1S. The C1Q subcomplex is composed 18 subunits: 3 chains of C1QA, C1QB, and C1QC trimerize to form 6 collagen-like triple helices connected to six globular ligand-recognition modules. In terms of processing, cleaved and activated by C1R to generate Complement C1s subcomponent heavy and light chains. The iron and 2-oxoglutarate dependent 3-hydroxylation of aspartate and asparagine is (R) stereospecific within EGF domains. In terms of tissue distribution, predominantly expressed in liver.

It localises to the secreted. It is found in the cell surface. It catalyses the reaction Cleavage of Arg-|-Ala bond in complement component C4 to form C4a and C4b, and Lys(or Arg)-|-Lys bond in complement component C2 to form C2a and C2b: the 'classical' pathway C3 convertase.. Cleaved and activated by C1R. Immunoglobulin-binding promotes autoactivation of C1R, which results in the cleavage of the Arg-Ile bond in the catalytic domain. Inhibited by C1 inhibitor (SERPING1). Functionally, component of the complement C1 complex, a multiprotein complex that initiates the classical pathway of the complement system, a cascade of proteins that leads to phagocytosis and breakdown of pathogens and signaling that strengthens the adaptive immune system. C1S is activated following association of the C1 complex with immunoglobulins (IgG or IgM) complexed with antigens to form antigen-antibody complexes on the surface of pathogens. C1S is cleaved and activated by C1R to generate C1s subcomponent heavy and light chains. C1s subcomponent light chain then cleaves and activates C2 and C4, the next components of the classical complement pathway. Serine protease component of the complement C1 complex, which catalyzes cleavage and activation of C2 and C4, the next components of the classical complement pathway. Also cleaves IGFBP5 and thereby inhibits the trophic effects of IGF1. The protein is Complement C1s-1 subcomponent of Mus musculus (Mouse).